A 141-amino-acid polypeptide reads, in one-letter code: Transcriptional regulator MraZ (141 aa).

SpoVT-AbrB domains are found at residues 5–47 (EFEH…PAER) and 76–119 (AAEC…GAEH).

This sequence belongs to the MraZ family. In terms of assembly, forms oligomers.

It localises to the cytoplasm. Its subcellular location is the nucleoid. This Lactiplantibacillus plantarum (strain ATCC BAA-793 / NCIMB 8826 / WCFS1) (Lactobacillus plantarum) protein is Transcriptional regulator MraZ.